The primary structure comprises 505 residues: Deoxyguanosinetriphosphate triphosphohydrolase (505 aa).

The region spanning 66-273 (RLTHSMEVQQ…MEAADDISYC (208 aa)) is the HD domain.

It belongs to the dGTPase family. Type 1 subfamily. Homotetramer. Requires Mg(2+) as cofactor.

It catalyses the reaction dGTP + H2O = 2'-deoxyguanosine + triphosphate + H(+). DGTPase preferentially hydrolyzes dGTP over the other canonical NTPs. This Escherichia coli O81 (strain ED1a) protein is Deoxyguanosinetriphosphate triphosphohydrolase.